We begin with the raw amino-acid sequence, 398 residues long: Carbamoyl phosphate synthase small chain (398 aa).

Residues 1 to 207 (MIQTISSSRP…KGYGTNNVHN (207 aa)) form a CPSase region. Serine 60, glycine 257, and glycine 259 together coordinate L-glutamine. The Glutamine amidotransferase type-1 domain occupies 209–397 (HIVAIDYGIK…CDLIMNHKKI (189 aa)). Catalysis depends on cysteine 286, which acts as the Nucleophile. 5 residues coordinate L-glutamine: leucine 287, glutamine 290, asparagine 328, glycine 330, and phenylalanine 331. Residues histidine 370 and glutamate 372 contribute to the active site.

The protein belongs to the CarA family. In terms of assembly, composed of two chains; the small (or glutamine) chain promotes the hydrolysis of glutamine to ammonia, which is used by the large (or ammonia) chain to synthesize carbamoyl phosphate. Tetramer of heterodimers (alpha,beta)4.

The catalysed reaction is hydrogencarbonate + L-glutamine + 2 ATP + H2O = carbamoyl phosphate + L-glutamate + 2 ADP + phosphate + 2 H(+). It catalyses the reaction L-glutamine + H2O = L-glutamate + NH4(+). It functions in the pathway amino-acid biosynthesis; L-arginine biosynthesis; carbamoyl phosphate from bicarbonate: step 1/1. It participates in pyrimidine metabolism; UMP biosynthesis via de novo pathway; (S)-dihydroorotate from bicarbonate: step 1/3. Functionally, small subunit of the glutamine-dependent carbamoyl phosphate synthetase (CPSase). CPSase catalyzes the formation of carbamoyl phosphate from the ammonia moiety of glutamine, carbonate, and phosphate donated by ATP, constituting the first step of 2 biosynthetic pathways, one leading to arginine and/or urea and the other to pyrimidine nucleotides. The small subunit (glutamine amidotransferase) binds and cleaves glutamine to supply the large subunit with the substrate ammonia. The chain is Carbamoyl phosphate synthase small chain from Bartonella tribocorum (strain CIP 105476 / IBS 506).